A 303-amino-acid polypeptide reads, in one-letter code: Probable 5-dehydro-4-deoxyglucarate dehydratase (303 aa).

The protein belongs to the DapA family.

The catalysed reaction is 5-dehydro-4-deoxy-D-glucarate + H(+) = 2,5-dioxopentanoate + CO2 + H2O. It functions in the pathway carbohydrate acid metabolism; D-glucarate degradation; 2,5-dioxopentanoate from D-glucarate: step 2/2. The polypeptide is Probable 5-dehydro-4-deoxyglucarate dehydratase (Acinetobacter baumannii (strain SDF)).